The primary structure comprises 218 residues: Glutathione S-transferase Mu 2 (218 aa).

In terms of domain architecture, GST N-terminal spans 2–88 (PMTLGYWNIR…YIARKHNLCG (87 aa)). 7 to 8 (YW) contacts glutathione. Residues serine 27 and serine 44 each carry the phosphoserine modification. Residues 43–46 (RSQW), lysine 50, 59–60 (NL), and 72–73 (QS) contribute to the glutathione site. One can recognise a GST C-terminal domain in the interval 90-208 (SEKEQIREDI…KSSRFLPRPV (119 aa)). Tyrosine 116 is a substrate binding site.

This sequence belongs to the GST superfamily. Mu family. As to quaternary structure, homodimer. Muscle.

It is found in the cytoplasm. It carries out the reaction RX + glutathione = an S-substituted glutathione + a halide anion + H(+). The catalysed reaction is 11(S)-hydroxy-14(S),15(S)-epoxy-(5Z,8Z,12E)-eicosatrienoate + glutathione = (11S,15S)-dihydroxy-14(R)-S-glutathionyl-(5Z,8Z,12E)-eicosatrienoate. In terms of biological role, conjugation of reduced glutathione to a wide number of exogenous and endogenous hydrophobic electrophiles. Participates in the formation of novel hepoxilin regioisomers. This is Glutathione S-transferase Mu 2 from Homo sapiens (Human).